A 439-amino-acid chain; its full sequence is Lipid-A-disaccharide synthase (439 aa).

This sequence belongs to the LpxB family.

It catalyses the reaction a lipid X + a UDP-2-N,3-O-bis[(3R)-3-hydroxyacyl]-alpha-D-glucosamine = a lipid A disaccharide + UDP + H(+). It participates in bacterial outer membrane biogenesis; LPS lipid A biosynthesis. In terms of biological role, condensation of UDP-2,3-diacylglucosamine and 2,3-diacylglucosamine-1-phosphate to form lipid A disaccharide, a precursor of lipid A, a phosphorylated glycolipid that anchors the lipopolysaccharide to the outer membrane of the cell. This chain is Lipid-A-disaccharide synthase, found in Xanthomonas axonopodis pv. citri (strain 306).